The chain runs to 293 residues: Protein PET54 (293 aa).

The protein localises to the mitochondrion inner membrane. Activator of specific mitochondrial mRNAs. PET54 is involved in the excision of intron aI5-beta from pre-mRNA for cytochrome c oxidase I (COX1) and plays a role in promoting the translation of COX3. The protein is Protein PET54 (PET54) of Saccharomyces cerevisiae (strain ATCC 204508 / S288c) (Baker's yeast).